A 279-amino-acid polypeptide reads, in one-letter code: Nitrogenase vanadium-iron protein alpha chain (279 aa).

The [8Fe-7S] cluster site is built by C5, C31, and C94. C213 contacts [7Fe-V-9S-C-homocitryl] cluster.

The protein belongs to the NifD/NifK/NifE/NifN family. Hexamer of two alpha, two beta, and two delta chains. The cofactor is [8Fe-7S] cluster. [7Fe-V-9S-C-homocitryl] cluster serves as cofactor.

The enzyme catalyses N2 + 8 reduced [2Fe-2S]-[ferredoxin] + 16 ATP + 16 H2O = H2 + 8 oxidized [2Fe-2S]-[ferredoxin] + 2 NH4(+) + 16 ADP + 16 phosphate + 6 H(+). In terms of biological role, this vanadium-iron protein is part of the nitrogenase complex that catalyzes the key enzymatic reactions in nitrogen fixation. The protein is Nitrogenase vanadium-iron protein alpha chain (vnfD) of Azotobacter salinestris.